The chain runs to 162 residues: Large ribosomal subunit protein uL11 (162 aa).

The tract at residues 1-27 (MAGTIEVLVPGGEANPGPPLGPELGPT) is disordered.

It belongs to the universal ribosomal protein uL11 family. As to quaternary structure, part of the 50S ribosomal subunit. Forms part of the ribosomal stalk which helps the ribosome interact with GTP-bound translation factors. Forms a heptameric L10(L12)2(L12)2(L12)2 complex, where L10 forms an elongated spine to which 3 L12 dimers bind in a sequential fashion.

In terms of biological role, forms part of the ribosomal stalk which helps the ribosome interact with GTP-bound translation factors. In Haloarcula marismortui (strain ATCC 43049 / DSM 3752 / JCM 8966 / VKM B-1809) (Halobacterium marismortui), this protein is Large ribosomal subunit protein uL11.